Here is a 272-residue protein sequence, read N- to C-terminus: Phosphatidylglycerol--prolipoprotein diacylglyceryl transferase (272 aa).

Helical transmembrane passes span 17-37 (LQVHWYGLMYLLAFLCAWGLA), 55-75 (LVFYGALGVVLGGRIGYVLFY), 90-110 (VWTGGMSFHGGFLGVMIAMLF), 125-145 (FVAPCVPTGLMFGRIGNFIGG), 174-194 (PSQIYQALCEGLLLFIILWWF), 202-222 (MAVSALFLMGYGVARFVMEFF), and 230-250 (GFILFGWMTKGQILTVPMLLI). Residue Arg138 participates in a 1,2-diacyl-sn-glycero-3-phospho-(1'-sn-glycerol) binding.

The protein belongs to the Lgt family.

It is found in the cell inner membrane. It carries out the reaction L-cysteinyl-[prolipoprotein] + a 1,2-diacyl-sn-glycero-3-phospho-(1'-sn-glycerol) = an S-1,2-diacyl-sn-glyceryl-L-cysteinyl-[prolipoprotein] + sn-glycerol 1-phosphate + H(+). It functions in the pathway protein modification; lipoprotein biosynthesis (diacylglyceryl transfer). In terms of biological role, catalyzes the transfer of the diacylglyceryl group from phosphatidylglycerol to the sulfhydryl group of the N-terminal cysteine of a prolipoprotein, the first step in the formation of mature lipoproteins. This Acinetobacter baumannii (strain AB307-0294) protein is Phosphatidylglycerol--prolipoprotein diacylglyceryl transferase.